We begin with the raw amino-acid sequence, 1191 residues long: MAGHEVQYGKHRTRRSFSRIKEVLDLPNLIEIQTDSFQDFLDAGLKEVFEDVLPISNFTDTMDLEFVGYELKEPKYTLEEARIHDASYSAPIFVTFRLVNKETGEIKTQEVFFGDFPIMTEMGTFIINGGERIIVSQLVRSPGVYFNDKVDKNGKVGYGSTVIPNRGAWLELETDAKDIAYTRIDRTRKIPFTTLVRALGFSGDDEIVDIFGDSELVRNTIEKDIHKNPSDSRTDEALKEIYERLRPGEPKTADSSRSLLVARFFDPRRYDLAAVGRYKINKKLNLKTRLLNQTIAENLVDGETGEILVEAGTVMTRDVIDSIAEHIDGDLNKFVYTPNDYAVVTEPVILQKFKVVAPTDPDRVVTIVGNSNPEDKVRALTPADILAEMSYFLNLAEGIGKVDDIDHLGNRRIRAVGELLANQFRIGLARMERNVRERMSVQDNEVLTPQQIINIRPVTAAVKEFFGSSQLSQFMDQHNPLSELSHKRRLSALGPGGLTRDRAGYEVRDVHYTHYGRMCPIETPEGPNIGLINNLSSFGHLNKYGFIQTPYRKVDRSTGAVTNEIVWLTADEEDEFTVAQANSKLNEDGTFAEEIVMGRHQGNNQEFPSSIVDFVDVSPKQVVAVATACIPFLENDDSNRALMGANMQRQAVPLIDPKAPYVGTGMEYQAAHDSGAAVIAKHDGRVIFSDAEKVEVRREDGSLDVYHVQKFRRSNSGTAYNQRTLVKVGDLVEKGDFIADGPSMENGEMALGQNPVVAYMTWEGYNFEDAVIMSERLVKEDVYTSVHLEEFESETRDTKLGPEEITREIPNVGEDSLRDLDEMGIIRIGAEVKEGDILVGKVTPKGEKDLSAEERLLHAIFGDKSREVRDTSLRVPHGGDGVVRDVKIFTRANGDELQSGVNMLVRVYIAQKRKIKVGDKMAGRHGNKGVVSRIVPVEDMPYLPDGTPVDIMLNPLGVPSRMNIGQVMELHLGMAARNLGIHIATPVFDGASSEDLWETVQEAGMDSDAKTVLYDGRTGEPFDNRVSVGVMYMIKLHHMVDDKLHARSVGPYSLVTQQPLGGKAQFGGQRFGEMEVWALEAYGASNVLQEILTYKSDDVTGRLKAYEAITKGKPIPKPGVPESFRVLVKELQSLGLDMRVLDEDDNEVELRDLDEGEDDDVMHVDDLEKARVKQEAEEKQAEQVSEVVQED.

Residues Arg-1171 to Ala-1181 show a composition bias toward basic and acidic residues. Positions Arg-1171 to Asp-1191 are disordered. Positions Glu-1182–Asp-1191 are enriched in low complexity.

Belongs to the RNA polymerase beta chain family. As to quaternary structure, the RNAP catalytic core consists of 2 alpha, 1 beta, 1 beta' and 1 omega subunit. When a sigma factor is associated with the core the holoenzyme is formed, which can initiate transcription.

It catalyses the reaction RNA(n) + a ribonucleoside 5'-triphosphate = RNA(n+1) + diphosphate. Its function is as follows. DNA-dependent RNA polymerase catalyzes the transcription of DNA into RNA using the four ribonucleoside triphosphates as substrates. In Streptococcus agalactiae serotype Ia (strain ATCC 27591 / A909 / CDC SS700), this protein is DNA-directed RNA polymerase subunit beta.